The chain runs to 380 residues: Cytochrome b (380 aa).

The next 4 membrane-spanning stretches (helical) occupy residues 33-53, 77-98, 113-133, and 178-198; these read FGSL…FLAM, WLIR…YLHV, WNIG…GYVL, and FFAF…IHLL. Positions 83 and 97 each coordinate heme b. H182 and H196 together coordinate heme b. H201 contacts a ubiquinone. Helical transmembrane passes span 226-246, 288-308, 320-340, and 347-367; these read YKDL…ALFS, LGGV…PMLH, PSQI…WIGG, and FVLI…IALP.

The protein belongs to the cytochrome b family. As to quaternary structure, the cytochrome bc1 complex contains 3 respiratory subunits (MT-CYB, CYC1 and UQCRFS1), 2 core proteins (UQCRC1 and UQCRC2) and probably 6 low-molecular weight proteins. Requires heme b as cofactor.

The protein resides in the mitochondrion inner membrane. Functionally, component of the ubiquinol-cytochrome c reductase complex (complex III or cytochrome b-c1 complex) that is part of the mitochondrial respiratory chain. The b-c1 complex mediates electron transfer from ubiquinol to cytochrome c. Contributes to the generation of a proton gradient across the mitochondrial membrane that is then used for ATP synthesis. This is Cytochrome b (mt-cyb) from Acipenser sinensis (Chinese sturgeon).